The following is a 252-amino-acid chain: Cytochrome c oxidase subunit 2 (252 aa).

Residues 1 to 39 (MFLIMLKGHILMDAPTPWGIFFQDSASPQMEGIMELHNN) lie on the Mitochondrial intermembrane side of the membrane. The helical transmembrane segment at 40-59 (IMFYLAIILFTVTWMMITII) threads the bilayer. The Mitochondrial matrix segment spans residues 60 to 81 (RNFVAKKSPIAHKYMNHGTLIE). The chain crosses the membrane as a helical span at residues 82-105 (LIWTITPAFILILIAFPSFKLLYL). At 106 to 252 (MDEVMDPSLV…LLWLRDQMEG (147 aa)) the chain is on the mitochondrial intermembrane side. Cu cation-binding residues include H184, C219, E221, C223, H227, and M230. E221 contacts Mg(2+).

Belongs to the cytochrome c oxidase subunit 2 family. In terms of assembly, component of the cytochrome c oxidase (complex IV, CIV), a multisubunit enzyme composed of a catalytic core of 3 subunits and several supernumerary subunits. The complex exists as a monomer or a dimer and forms supercomplexes (SCs) in the inner mitochondrial membrane with ubiquinol-cytochrome c oxidoreductase (cytochrome b-c1 complex, complex III, CIII). Cu cation is required as a cofactor.

The protein localises to the mitochondrion inner membrane. It catalyses the reaction 4 Fe(II)-[cytochrome c] + O2 + 8 H(+)(in) = 4 Fe(III)-[cytochrome c] + 2 H2O + 4 H(+)(out). In terms of biological role, component of the cytochrome c oxidase, the last enzyme in the mitochondrial electron transport chain which drives oxidative phosphorylation. The respiratory chain contains 3 multisubunit complexes succinate dehydrogenase (complex II, CII), ubiquinol-cytochrome c oxidoreductase (cytochrome b-c1 complex, complex III, CIII) and cytochrome c oxidase (complex IV, CIV), that cooperate to transfer electrons derived from NADH and succinate to molecular oxygen, creating an electrochemical gradient over the inner membrane that drives transmembrane transport and the ATP synthase. Cytochrome c oxidase is the component of the respiratory chain that catalyzes the reduction of oxygen to water. Electrons originating from reduced cytochrome c in the intermembrane space (IMS) are transferred via the dinuclear copper A center (CU(A)) of subunit 2 and heme A of subunit 1 to the active site in subunit 1, a binuclear center (BNC) formed by heme A3 and copper B (CU(B)). The BNC reduces molecular oxygen to 2 water molecules using 4 electrons from cytochrome c in the IMS and 4 protons from the mitochondrial matrix. In Emericella nidulans (Aspergillus nidulans), this protein is Cytochrome c oxidase subunit 2 (cox2).